Here is a 147-residue protein sequence, read N- to C-terminus: Peroxynitrite isomerase (147 aa).

His137 contributes to the heme b binding site.

This sequence belongs to the nitrobindin family. As to quaternary structure, homodimer. The cofactor is heme b.

It carries out the reaction peroxynitrite = nitrate. The protein operates within nitrogen metabolism. Its function is as follows. Heme-binding protein able to scavenge peroxynitrite and to protect free L-tyrosine against peroxynitrite-mediated nitration, by acting as a peroxynitrite isomerase that converts peroxynitrite to nitrate. Therefore, this protein likely plays a role in peroxynitrite sensing and in the detoxification of reactive nitrogen and oxygen species (RNS and ROS, respectively). Is able to bind nitric oxide (NO) in vitro, but may act as a sensor of peroxynitrite levels in vivo. The polypeptide is Peroxynitrite isomerase (Frankia alni (strain DSM 45986 / CECT 9034 / ACN14a)).